The primary structure comprises 274 residues: Syntaxin-12 (274 aa).

2 disordered regions span residues 1-20 (MSYG…PQPR) and 128-147 (EKES…EDRQ). S2 carries the N-acetylserine modification. Residues 2–250 (SYGPLDMYRN…AYYQKKSRKK (249 aa)) lie on the Cytoplasmic side of the membrane. Residues 33–130 (IQRISQATAQ…QRKVSEKEKE (98 aa)) adopt a coiled-coil conformation. S139, S142, S218, and S225 each carry phosphoserine. One can recognise a t-SNARE coiled-coil homology domain in the interval 178–240 (LELIKERETA…ERATDQLQRA (63 aa)). Residues 251-271 (MCILVLVLSVIVTVLVVVIWV) form a helical; Anchor for type IV membrane protein membrane-spanning segment. Topologically, residues 272–274 (ASK) are vesicular.

The protein belongs to the syntaxin family. In terms of assembly, associates with the BLOC-1 complex. Interacts with BLOC1S6. Interacts with NAPA and SNAP23. Identified in a complex containing STX6, STX12, VAMP4 and VTI1A. Interacts with GRIPAP1. Forms a complex with GRIP1, GRIA2 and NSG1; controls the intracellular fate of AMPAR and the endosomal sorting of the GRIA2 subunit toward recycling and membrane targeting. Interacts with NSG1. Interacts with TPC1. Interacts (via N-terminus) with VPS13B.

Its subcellular location is the endosome membrane. The protein resides in the golgi apparatus membrane. It is found in the endomembrane system. It localises to the early endosome membrane. The protein localises to the recycling endosome membrane. Its function is as follows. SNARE promoting fusion of transport vesicles with target membranes. Together with SNARE STX6, promotes movement of vesicles from endosomes to the cell membrane, and may therefore function in the endocytic recycling pathway. Through complex formation with GRIP1, GRIA2 and NSG1 controls the intracellular fate of AMPAR and the endosomal sorting of the GRIA2 subunit toward recycling and membrane targeting. This Mus musculus (Mouse) protein is Syntaxin-12 (Stx12).